An 89-amino-acid chain; its full sequence is Small ribosomal subunit protein uS15 (89 aa).

Belongs to the universal ribosomal protein uS15 family. Part of the 30S ribosomal subunit. Forms a bridge to the 50S subunit in the 70S ribosome, contacting the 23S rRNA.

Functionally, one of the primary rRNA binding proteins, it binds directly to 16S rRNA where it helps nucleate assembly of the platform of the 30S subunit by binding and bridging several RNA helices of the 16S rRNA. Its function is as follows. Forms an intersubunit bridge (bridge B4) with the 23S rRNA of the 50S subunit in the ribosome. The chain is Small ribosomal subunit protein uS15 from Acaryochloris marina (strain MBIC 11017).